The primary structure comprises 372 residues: Heat shock 70 kDa protein II (372 aa).

It belongs to the heat shock protein 70 family.

This Paracentrotus lividus (Common sea urchin) protein is Heat shock 70 kDa protein II (HSP70II).